A 218-amino-acid polypeptide reads, in one-letter code: Probable septum site-determining protein MinC (218 aa).

It belongs to the MinC family. In terms of assembly, interacts with MinD and FtsZ.

Cell division inhibitor that blocks the formation of polar Z ring septums. Rapidly oscillates between the poles of the cell to destabilize FtsZ filaments that have formed before they mature into polar Z rings. Prevents FtsZ polymerization. In Kosmotoga olearia (strain ATCC BAA-1733 / DSM 21960 / TBF 19.5.1), this protein is Probable septum site-determining protein MinC.